The primary structure comprises 415 residues: Diaminopimelate decarboxylase (415 aa).

Lysine 54 carries the post-translational modification N6-(pyridoxal phosphate)lysine. Residues glycine 223 and glutamate 264 to arginine 267 contribute to the pyridoxal 5'-phosphate site. Positions 267, 303, and 307 each coordinate substrate. Cysteine 338 functions as the Proton donor in the catalytic mechanism. 2 residues coordinate substrate: glutamate 339 and tyrosine 374. Tyrosine 374 provides a ligand contact to pyridoxal 5'-phosphate.

The protein belongs to the Orn/Lys/Arg decarboxylase class-II family. LysA subfamily. Homodimer. Pyridoxal 5'-phosphate serves as cofactor.

It carries out the reaction meso-2,6-diaminopimelate + H(+) = L-lysine + CO2. Its pathway is amino-acid biosynthesis; L-lysine biosynthesis via DAP pathway; L-lysine from DL-2,6-diaminopimelate: step 1/1. Functionally, specifically catalyzes the decarboxylation of meso-diaminopimelate (meso-DAP) to L-lysine. This is Diaminopimelate decarboxylase from Buchnera aphidicola subsp. Schizaphis graminum (strain Sg).